A 515-amino-acid polypeptide reads, in one-letter code: Mucin-like protein Glc1.8b (515 aa).

The first 20 residues, 1–20 (MSQITLIILVLAIGFSCTKS), serve as a signal peptide directing secretion. Topologically, residues 21–467 (HPINSTRDGE…ANDIKKPAFP (447 aa)) are extracellular. 29 N-linked (GlcNAc...) asparagine; by host glycosylation sites follow: Asn-24, Asn-45, Asn-51, Asn-60, Asn-85, Asn-93, Asn-102, Asn-123, Asn-129, Asn-138, Asn-180, Asn-201, Asn-207, Asn-216, Asn-258, Asn-279, Asn-285, Asn-294, Asn-319, Asn-327, Asn-336, Asn-357, Asn-363, Asn-372, Asn-397, Asn-405, Asn-413, Asn-434, and Asn-441. The interval 80–114 (SKKDENITGQSEINTSAKSQPINSTRDGEDSGTDL) is disordered. Residues 86-104 (ITGQSEINTSAKSQPINST) are compositionally biased toward polar residues. Residues 314–358 (SKKDENITGQSEINTSAKSQPINSTRDGEDSGTDLKNLLTDPANT) form a disordered region. The span at 320-338 (ITGQSEINTSAKSQPINST) shows a compositional bias: polar residues. A disordered region spans residues 393–413 (RKDENVTGQSEFNISTNSNLN). A helical transmembrane segment spans residues 468-488 (YCIILITFQIVTVGMIIYLVF). Residues 489-515 (RTMRKPCQSERAIPLNSFGFGNNSSYE) are Cytoplasmic-facing.

This sequence belongs to the polydnaviridae Glc1.8 protein family.

It is found in the host membrane. Functionally, involved in suppression of the insect cellular immune response. Inhibits host hemocyte adhesion and phagocytosis. In Microplitis demolitor (Parasitoid wasp), this protein is Mucin-like protein Glc1.8b (O16).